The sequence spans 181 residues: Large ribosomal subunit protein uL5 (181 aa).

It belongs to the universal ribosomal protein uL5 family. Part of the 50S ribosomal subunit; part of the 5S rRNA/L5/L18/L25 subcomplex. Contacts the 5S rRNA and the P site tRNA. Forms a bridge to the 30S subunit in the 70S ribosome.

Its function is as follows. This is one of the proteins that bind and probably mediate the attachment of the 5S RNA into the large ribosomal subunit, where it forms part of the central protuberance. In the 70S ribosome it contacts protein S13 of the 30S subunit (bridge B1b), connecting the 2 subunits; this bridge is implicated in subunit movement. Contacts the P site tRNA; the 5S rRNA and some of its associated proteins might help stabilize positioning of ribosome-bound tRNAs. This chain is Large ribosomal subunit protein uL5, found in Campylobacter jejuni subsp. jejuni serotype O:6 (strain 81116 / NCTC 11828).